Reading from the N-terminus, the 446-residue chain is Phosphoglucosamine mutase (446 aa).

The Phosphoserine intermediate role is filled by serine 99. Residues serine 99, aspartate 242, aspartate 244, and aspartate 246 each coordinate Mg(2+). Serine 99 carries the phosphoserine modification.

Belongs to the phosphohexose mutase family. Requires Mg(2+) as cofactor. Activated by phosphorylation.

The enzyme catalyses alpha-D-glucosamine 1-phosphate = D-glucosamine 6-phosphate. Catalyzes the conversion of glucosamine-6-phosphate to glucosamine-1-phosphate. The polypeptide is Phosphoglucosamine mutase (Campylobacter hominis (strain ATCC BAA-381 / DSM 21671 / CCUG 45161 / LMG 19568 / NCTC 13146 / CH001A)).